The sequence spans 273 residues: uncharacterized protein (273 aa).

The protein resides in the virion. This is an uncharacterized protein from Acanthamoeba polyphaga (Amoeba).